Consider the following 323-residue polypeptide: 4-diphosphocytidyl-2-C-methyl-D-erythritol kinase (323 aa).

The active site involves lysine 25. 110–120 (PVAGGMAGGSA) provides a ligand contact to ATP. Aspartate 152 is an active-site residue.

It belongs to the GHMP kinase family. IspE subfamily.

It carries out the reaction 4-CDP-2-C-methyl-D-erythritol + ATP = 4-CDP-2-C-methyl-D-erythritol 2-phosphate + ADP + H(+). Its pathway is isoprenoid biosynthesis; isopentenyl diphosphate biosynthesis via DXP pathway; isopentenyl diphosphate from 1-deoxy-D-xylulose 5-phosphate: step 3/6. Its function is as follows. Catalyzes the phosphorylation of the position 2 hydroxy group of 4-diphosphocytidyl-2C-methyl-D-erythritol. This is 4-diphosphocytidyl-2-C-methyl-D-erythritol kinase from Mycobacterium leprae (strain Br4923).